The primary structure comprises 269 residues: MFPENKMLLIAGPCVIEDNSVFETARRLKEIVAPYASSVHWIFKSSYDKANRSSVHNYRGPGLRLGLQTLAKIKEELDVEILTDVHSPDEAREAAKVCDIIQVPAFLCRQTDLLVTAGETQAIVNIKKGQFLSPWEMQGPIDKVLSTGNNKIILTERGCSFGYNNLVSDMRSIEVLRRFGFPVVFDGTHSVQLPGALHSQSGGQTEFIPVLTRSAIAAGVQGLFIETHPNPSSALSDAASMLSLKDLERLLPAWVQLFTYIQEMDAVSV.

Belongs to the KdsA family.

The protein resides in the cytoplasm. The catalysed reaction is D-arabinose 5-phosphate + phosphoenolpyruvate + H2O = 3-deoxy-alpha-D-manno-2-octulosonate-8-phosphate + phosphate. It participates in carbohydrate biosynthesis; 3-deoxy-D-manno-octulosonate biosynthesis; 3-deoxy-D-manno-octulosonate from D-ribulose 5-phosphate: step 2/3. The protein operates within bacterial outer membrane biogenesis; lipopolysaccharide biosynthesis. The protein is 2-dehydro-3-deoxyphosphooctonate aldolase of Chlamydia trachomatis serovar L2 (strain ATCC VR-902B / DSM 19102 / 434/Bu).